The following is a 2079-amino-acid chain: von Willebrand factor A domain-containing protein DDB_G0286969 (2079 aa).

The 137-residue stretch at 11–147 (EQILPSFISI…ELEIIITYST (137 aa)) folds into the VIT domain. The disordered stretch occupies residues 178–203 (NENSTTNTNTQTQPQSVNTTTTTTPS). Residues 180–203 (NSTTNTNTQTQPQSVNTTTTTTPS) are compositionally biased toward low complexity. The 172-residue stretch at 354 to 525 (ELIFLVDVSE…KVMRQLKRAL (172 aa)) folds into the VWFA domain. Disordered regions lie at residues 761 to 800 (PTTL…LKTP), 832 to 866 (PFVP…TEVK), 956 to 1139 (AKPV…TKPT), 1155 to 1203 (NEPA…VSST), and 1239 to 1294 (DSNT…ADAE). Composition is skewed to low complexity over residues 785-800 (TTQQ…LKTP), 841-866 (PTTT…TEVK), and 956-973 (AKPV…QQTK). Positions 923 to 957 (EMIKIAEAKAAAEQKAAAEQKAIADAKAAAEQAAK) form a coiled coil. The span at 974 to 989 (PKADKQSKQNAKDNKQ) shows a compositional bias: basic and acidic residues. A compositionally biased stretch (low complexity) spans 992–1006 (KPVVVEQKPPVVTET). Positions 1007 to 1021 (KPTVATESATPTKPT) are enriched in polar residues. Over residues 1023 to 1061 (AQAAAAAAAAAQQAAQQAAATTPVKQQPTKQTTPNKSTP) the composition is skewed to low complexity. Over residues 1092-1111 (KPVETKPVEQTKPVETKPVE) the composition is skewed to basic and acidic residues. Over residues 1176–1198 (NNNNNNNNNNNNNNNNNNNNNNN) the composition is skewed to low complexity. Over residues 1239–1272 (DSNTKAPDSLKTTPIFSNGPQGISPSSGNGSNKS) the composition is skewed to polar residues. Basic and acidic residues predominate over residues 1280 to 1292 (DRGGRGGRDRNAD). The region spanning 1317 to 1527 (LKKFKFNLNR…LDLIDLRANK (211 aa)) is the MIF4G domain. A disordered region spans residues 1530-1755 (PKNSTQTKTK…PAPVEPVKPK (226 aa)). Basic and acidic residues-rich tracts occupy residues 1538–1550 (TKKD…ERFI), 1557–1599 (QKRE…RDAP), and 1621–1634 (NNRD…DRSG). Low complexity-rich tracts occupy residues 1635-1659 (GKQS…LFGS) and 1688-1699 (SSSIPSIPNRSN). Residues 1725–1740 (SNDRDSRGPSKPDNRK) are compositionally biased toward basic and acidic residues. Positions 1760-1882 (KIEDDISMTL…PLNYLEEAYA (123 aa)) constitute an MI domain.

This Dictyostelium discoideum (Social amoeba) protein is von Willebrand factor A domain-containing protein DDB_G0286969.